A 305-amino-acid chain; its full sequence is tRNA N6-adenosine threonylcarbamoyltransferase (305 aa).

Fe cation is bound by residues H108 and H112. Residues V130 to G134, D163, G176, D180, and N264 contribute to the substrate site. D288 is a Fe cation binding site.

It belongs to the KAE1 / TsaD family. The cofactor is Fe(2+).

The protein localises to the cytoplasm. The enzyme catalyses L-threonylcarbamoyladenylate + adenosine(37) in tRNA = N(6)-L-threonylcarbamoyladenosine(37) in tRNA + AMP + H(+). Its function is as follows. Required for the formation of a threonylcarbamoyl group on adenosine at position 37 (t(6)A37) in tRNAs that read codons beginning with adenine. Is involved in the transfer of the threonylcarbamoyl moiety of threonylcarbamoyl-AMP (TC-AMP) to the N6 group of A37, together with TsaE and TsaB. TsaD likely plays a direct catalytic role in this reaction. The chain is tRNA N6-adenosine threonylcarbamoyltransferase from Mycoplasma mobile (strain ATCC 43663 / 163K / NCTC 11711) (Mesomycoplasma mobile).